We begin with the raw amino-acid sequence, 142 residues long: Large ribosomal subunit protein uL13 (142 aa).

The protein belongs to the universal ribosomal protein uL13 family. As to quaternary structure, part of the 50S ribosomal subunit.

In terms of biological role, this protein is one of the early assembly proteins of the 50S ribosomal subunit, although it is not seen to bind rRNA by itself. It is important during the early stages of 50S assembly. The protein is Large ribosomal subunit protein uL13 of Shewanella baltica (strain OS223).